We begin with the raw amino-acid sequence, 105 residues long: Large ribosomal subunit protein eL42 (105 aa).

The disordered stretch occupies residues 23-61 (KVTQYKKGKESKFAQGRRRYDRKQSGFGGQTKPIFRKKA).

Belongs to the eukaryotic ribosomal protein eL42 family.

The polypeptide is Large ribosomal subunit protein eL42 (Caenorhabditis elegans).